Consider the following 266-residue polypeptide: Undecaprenyl-diphosphatase (266 aa).

The next 7 membrane-spanning stretches (helical) occupy residues 39–59 (PGAS…AYYF), 86–106 (SIFI…IFIP), 112–132 (VLRS…FMYL), 147–167 (NFSN…PGVS), 189–209 (FSFL…FVSS), 216–236 (LGFF…LLAI), and 246–266 (NGLK…LLNL).

This sequence belongs to the UppP family.

The protein localises to the cell inner membrane. The catalysed reaction is di-trans,octa-cis-undecaprenyl diphosphate + H2O = di-trans,octa-cis-undecaprenyl phosphate + phosphate + H(+). Its function is as follows. Catalyzes the dephosphorylation of undecaprenyl diphosphate (UPP). Confers resistance to bacitracin. This is Undecaprenyl-diphosphatase from Prochlorococcus marinus (strain MIT 9301).